The following is a 490-amino-acid chain: Glutamate--tRNA ligase (490 aa).

A 'HIGH' region motif is present at residues 9–19 (PSPTGLQHIGG). A 'KMSKS' region motif is present at residues 251 to 255 (KLSKR). Lys-254 provides a ligand contact to ATP.

The protein belongs to the class-I aminoacyl-tRNA synthetase family. Glutamate--tRNA ligase type 1 subfamily. Monomer.

It localises to the cytoplasm. The catalysed reaction is tRNA(Glu) + L-glutamate + ATP = L-glutamyl-tRNA(Glu) + AMP + diphosphate. Catalyzes the attachment of glutamate to tRNA(Glu) in a two-step reaction: glutamate is first activated by ATP to form Glu-AMP and then transferred to the acceptor end of tRNA(Glu). In Borreliella burgdorferi (strain ATCC 35210 / DSM 4680 / CIP 102532 / B31) (Borrelia burgdorferi), this protein is Glutamate--tRNA ligase.